Here is a 608-residue protein sequence, read N- to C-terminus: DNA mismatch repair protein MutL (608 aa).

Belongs to the DNA mismatch repair MutL/HexB family.

Functionally, this protein is involved in the repair of mismatches in DNA. It is required for dam-dependent methyl-directed DNA mismatch repair. May act as a 'molecular matchmaker', a protein that promotes the formation of a stable complex between two or more DNA-binding proteins in an ATP-dependent manner without itself being part of a final effector complex. The polypeptide is DNA mismatch repair protein MutL (Anaeromyxobacter dehalogenans (strain 2CP-C)).